We begin with the raw amino-acid sequence, 287 residues long: Polyamine aminopropyltransferase (287 aa).

In terms of domain architecture, PABS spans 5 to 238 (EIWYETLHAN…GIMTFAWASN (234 aa)). Glutamine 33 is an S-methyl-5'-thioadenosine binding site. Positions 64 and 88 each coordinate spermidine. S-methyl-5'-thioadenosine-binding positions include glutamate 108 and 140 to 141 (DG). Catalysis depends on aspartate 158, which acts as the Proton acceptor. Position 158-161 (158-161 (DCTD)) interacts with spermidine. Proline 165 serves as a coordination point for S-methyl-5'-thioadenosine.

It belongs to the spermidine/spermine synthase family. As to quaternary structure, homodimer or homotetramer.

It is found in the cytoplasm. The catalysed reaction is S-adenosyl 3-(methylsulfanyl)propylamine + putrescine = S-methyl-5'-thioadenosine + spermidine + H(+). Its pathway is amine and polyamine biosynthesis; spermidine biosynthesis; spermidine from putrescine: step 1/1. In terms of biological role, catalyzes the irreversible transfer of a propylamine group from the amino donor S-adenosylmethioninamine (decarboxy-AdoMet) to putrescine (1,4-diaminobutane) to yield spermidine. In Pectobacterium atrosepticum (strain SCRI 1043 / ATCC BAA-672) (Erwinia carotovora subsp. atroseptica), this protein is Polyamine aminopropyltransferase.